Here is a 242-residue protein sequence, read N- to C-terminus: Carboxy-S-adenosyl-L-methionine synthase (242 aa).

Residues Tyr-39, 64–66, 89–90, 117–118, Asn-132, and Arg-199 contribute to the S-adenosyl-L-methionine site; these read GCS, DN, and DI.

It belongs to the class I-like SAM-binding methyltransferase superfamily. Cx-SAM synthase family. Homodimer.

The catalysed reaction is prephenate + S-adenosyl-L-methionine = carboxy-S-adenosyl-L-methionine + 3-phenylpyruvate + H2O. Its function is as follows. Catalyzes the conversion of S-adenosyl-L-methionine (SAM) to carboxy-S-adenosyl-L-methionine (Cx-SAM). In Aliivibrio salmonicida (strain LFI1238) (Vibrio salmonicida (strain LFI1238)), this protein is Carboxy-S-adenosyl-L-methionine synthase.